The chain runs to 242 residues: uncharacterized protein (242 aa).

Helical transmembrane passes span N4–V24 and L34–G54. N-linked (GlcNAc...) asparagine; by host glycosylation occurs at N73. 3 helical membrane passes run Y74–Y94, V106–F126, and L162–Y182. N-linked (GlcNAc...) asparagine; by host glycosylation occurs at N185. Transmembrane regions (helical) follow at residues V189–L209 and C217–I237.

The protein resides in the membrane. This is an uncharacterized protein from Acanthamoeba polyphaga mimivirus (APMV).